Consider the following 365-residue polypeptide: Probable dual-specificity RNA methyltransferase RlmN (365 aa).

Catalysis depends on Glu-108, which acts as the Proton acceptor. Residues 114–352 (YPDRNTVCIS…SCTVRDTRGR (239 aa)) enclose the Radical SAM core domain. Cys-121 and Cys-358 form a disulfide bridge. The [4Fe-4S] cluster site is built by Cys-128, Cys-132, and Cys-135. S-adenosyl-L-methionine-binding positions include 179–180 (GE), Ser-213, 236–238 (SLH), and Asn-315. Catalysis depends on Cys-358, which acts as the S-methylcysteine intermediate.

Belongs to the radical SAM superfamily. RlmN family. The cofactor is [4Fe-4S] cluster.

Its subcellular location is the cytoplasm. The enzyme catalyses adenosine(2503) in 23S rRNA + 2 reduced [2Fe-2S]-[ferredoxin] + 2 S-adenosyl-L-methionine = 2-methyladenosine(2503) in 23S rRNA + 5'-deoxyadenosine + L-methionine + 2 oxidized [2Fe-2S]-[ferredoxin] + S-adenosyl-L-homocysteine. It carries out the reaction adenosine(37) in tRNA + 2 reduced [2Fe-2S]-[ferredoxin] + 2 S-adenosyl-L-methionine = 2-methyladenosine(37) in tRNA + 5'-deoxyadenosine + L-methionine + 2 oxidized [2Fe-2S]-[ferredoxin] + S-adenosyl-L-homocysteine. Functionally, specifically methylates position 2 of adenine 2503 in 23S rRNA and position 2 of adenine 37 in tRNAs. This Mycolicibacterium gilvum (strain PYR-GCK) (Mycobacterium gilvum (strain PYR-GCK)) protein is Probable dual-specificity RNA methyltransferase RlmN.